The following is a 189-amino-acid chain: Elongation factor P (189 aa).

Lysine 34 is subject to N6-(3,6-diaminohexanoyl)-5-hydroxylysine.

It belongs to the elongation factor P family. May be beta-lysylated on the epsilon-amino group of Lys-34 by the combined action of EpmA and EpmB, and then hydroxylated on the C5 position of the same residue by EpmC (if this protein is present). Lysylation is critical for the stimulatory effect of EF-P on peptide-bond formation. The lysylation moiety may extend toward the peptidyltransferase center and stabilize the terminal 3-CCA end of the tRNA. Hydroxylation of the C5 position on Lys-34 may allow additional potential stabilizing hydrogen-bond interactions with the P-tRNA.

The protein resides in the cytoplasm. It functions in the pathway protein biosynthesis; polypeptide chain elongation. Involved in peptide bond synthesis. Alleviates ribosome stalling that occurs when 3 or more consecutive Pro residues or the sequence PPG is present in a protein, possibly by augmenting the peptidyl transferase activity of the ribosome. Modification of Lys-34 is required for alleviation. The protein is Elongation factor P of Dichelobacter nodosus (strain VCS1703A).